Here is a 161-residue protein sequence, read N- to C-terminus: Allophycocyanin alpha-B chain (161 aa).

Asparagine 71 is subject to N4-methylasparagine. Cysteine 81 contacts (2R,3E)-phycocyanobilin.

This sequence belongs to the phycobiliprotein family. In terms of processing, contains one covalently linked bilin chromophore.

The protein resides in the plastid. It localises to the chloroplast thylakoid membrane. In terms of biological role, allophycocyanin is a photosynthetic bile pigment-protein complex with maximum absorption at approximately 650 nanometers. The polypeptide is Allophycocyanin alpha-B chain (apcD) (Pyropia yezoensis (Susabi-nori)).